The sequence spans 291 residues: tRNA dimethylallyltransferase (291 aa).

Position 8–15 (8–15) interacts with ATP; the sequence is GSTASGKT. 10 to 15 is a binding site for substrate; sequence TASGKT. The tract at residues 33 to 36 is interaction with substrate tRNA; the sequence is DSLC.

This sequence belongs to the IPP transferase family. As to quaternary structure, monomer. Mg(2+) is required as a cofactor.

It catalyses the reaction adenosine(37) in tRNA + dimethylallyl diphosphate = N(6)-dimethylallyladenosine(37) in tRNA + diphosphate. Functionally, catalyzes the transfer of a dimethylallyl group onto the adenine at position 37 in tRNAs that read codons beginning with uridine, leading to the formation of N6-(dimethylallyl)adenosine (i(6)A). The protein is tRNA dimethylallyltransferase of Aliarcobacter butzleri (strain RM4018) (Arcobacter butzleri).